A 251-amino-acid chain; its full sequence is 5'-nucleotidase SurE (251 aa).

A divalent metal cation is bound by residues Asp8, Asp9, Ser40, and Asn95.

The protein belongs to the SurE nucleotidase family. It depends on a divalent metal cation as a cofactor.

The protein localises to the cytoplasm. It catalyses the reaction a ribonucleoside 5'-phosphate + H2O = a ribonucleoside + phosphate. In terms of biological role, nucleotidase that shows phosphatase activity on nucleoside 5'-monophosphates. The protein is 5'-nucleotidase SurE of Lawsonia intracellularis (strain PHE/MN1-00).